The chain runs to 474 residues: Hepatocyte nuclear factor 4-alpha (474 aa).

Residues 57-132 (SALCAICGDR…AGMKKEAVQN (76 aa)) constitute a DNA-binding region (nuclear receptor). NR C4-type zinc fingers lie at residues 60 to 80 (CAIC…CDGC) and 96 to 120 (CRFS…LKKC). 2 positions are modified to phosphoserine; by PKA: Ser-142 and Ser-143. Position 144 is a phosphotyrosine (Tyr-144). In terms of domain architecture, NR LBD spans 147-377 (SSLPSINALL…NLLQEMLLGG (231 aa)). Position 166 is a phosphothreonine (Thr-166). Ser-167 is subject to Phosphoserine. Residues Lys-234 and Lys-307 each participate in a glycyl lysine isopeptide (Lys-Gly) (interchain with G-Cter in ubiquitin) cross-link. Phosphoserine; by AMPK is present on Ser-313. The 9aaTAD motif lies at 368–376 (NLLQEMLLG). The interval 413-450 (SNGQMCEWPRPRGQAATPETPQPSPPSGSGSESYKLLP) is disordered. Thr-429 and Thr-432 each carry phosphothreonine. At Ser-436 the chain carries Phosphoserine. Lys-458 carries the post-translational modification N6-acetyllysine.

It belongs to the nuclear hormone receptor family. NR2 subfamily. In terms of assembly, homodimerization is required for HNF4-alpha to bind to its recognition site. Interacts with CLOCK, BMAL1, CRY1, CRY2, PER1 and PER2. Interacts with NR0B2/SHP; the resulting heterodimer is transcriptionally inactive. Interacts with DDX3X; this interaction disrupts the interaction between HNF4 and NR0B2 that forms inactive heterodimers and enhances the formation of active HNF4 homodimers. Post-translationally, phosphorylation at Ser-313 by AMPK reduces the ability to form homodimers and bind DNA. Phosphorylated in the recognition sequence R-R-S-S near the DNA-binding domain; phosphorylation results in decrease in DNA-binding activity. Phosphorylation of HNF4 depends on the diet and is decreased by a carbohydrate-rich diet and is increased by fasting. The N-terminus is blocked. In terms of processing, acetylation at Lys-458 lowers transcriptional activation by about two-fold. In terms of tissue distribution, liver, kidney and intestine.

The protein localises to the nucleus. In terms of biological role, transcriptional regulator which controls the expression of hepatic genes during the transition of endodermal cells to hepatic progenitor cells, facilitating the recruitment of RNA pol II to the promoters of target genes. Activates the transcription of CYP2C38. Represses the CLOCK-BMAL1 transcriptional activity and is essential for circadian rhythm maintenance and period regulation in the liver and colon cells. In Rattus norvegicus (Rat), this protein is Hepatocyte nuclear factor 4-alpha (Hnf4a).